The sequence spans 82 residues: Large ribosomal subunit protein bL27 (82 aa).

A disordered region spans residues 1 to 20 (MATKKAGGSSSNGRDSIGKR).

The protein belongs to the bacterial ribosomal protein bL27 family.

In Neorickettsia sennetsu (strain ATCC VR-367 / Miyayama) (Ehrlichia sennetsu), this protein is Large ribosomal subunit protein bL27.